Reading from the N-terminus, the 444-residue chain is Tubulin beta-9 chain (444 aa).

The GTP site is built by Gln11, Glu69, Ser138, Gly142, Thr143, Gly144, Asn204, and Asn226. Glu69 is a binding site for Mg(2+).

It belongs to the tubulin family. In terms of assembly, dimer of alpha and beta chains. A typical microtubule is a hollow water-filled tube with an outer diameter of 25 nm and an inner diameter of 15 nM. Alpha-beta heterodimers associate head-to-tail to form protofilaments running lengthwise along the microtubule wall with the beta-tubulin subunit facing the microtubule plus end conferring a structural polarity. Microtubules usually have 13 protofilaments but different protofilament numbers can be found in some organisms and specialized cells. Interacts with TFCA. Mg(2+) serves as cofactor.

The protein resides in the cytoplasm. It is found in the cytoskeleton. In terms of biological role, tubulin is the major constituent of microtubules, a cylinder consisting of laterally associated linear protofilaments composed of alpha- and beta-tubulin heterodimers. Microtubules grow by the addition of GTP-tubulin dimers to the microtubule end, where a stabilizing cap forms. Below the cap, tubulin dimers are in GDP-bound state, owing to GTPase activity of alpha-tubulin. The chain is Tubulin beta-9 chain (TUBB9) from Arabidopsis thaliana (Mouse-ear cress).